The sequence spans 95 residues: Co-chaperonin GroES (95 aa).

It belongs to the GroES chaperonin family. Heptamer of 7 subunits arranged in a ring. Interacts with the chaperonin GroEL.

The protein localises to the cytoplasm. In terms of biological role, together with the chaperonin GroEL, plays an essential role in assisting protein folding. The GroEL-GroES system forms a nano-cage that allows encapsulation of the non-native substrate proteins and provides a physical environment optimized to promote and accelerate protein folding. GroES binds to the apical surface of the GroEL ring, thereby capping the opening of the GroEL channel. The polypeptide is Co-chaperonin GroES (Glaesserella parasuis serovar 5 (strain SH0165) (Haemophilus parasuis)).